Consider the following 321-residue polypeptide: MEVHVCSVGTSLLKNSLDDDNVRKEIERLGLKDWDRLKFDDDRQNRIKENFDSLRKMLLKFIRSKGRRASAELDSLFSTFEKLKHNKSEIYVFLYSTNTSNSQLAGEVIRDYLIEEGIRSELVTVKTISSEENFYEGIVDLFDKVIYRILKFKEQDNEVYINATPGLKPESIFLTLAGLLAGADLIYYKYQEFNDVVILPSPPITIRPKYLDWLIRFAISGYTLSEKRAEELGIPVRLLEAKMLVERKGEDAYRLKDWVRKLLGIYLPIGAQNKYYRVIVEGEGERTFDNEVEAYNYMESKRKEGKNVRVEVPDRVYFLGL.

The protein belongs to the cOA ring nuclease family. In terms of assembly, homodimer. Does not require a metal cofactor. serves as cofactor.

Its subcellular location is the cytoplasm. The enzyme catalyses cyclic tetraadenylate = 2 5'-hydroxy-diadenylate 2',3'-cylic phosphate. Its function is as follows. CRISPR (clustered regularly interspaced short palindromic repeat) is an adaptive immune system that provides protection against mobile genetic elements (viruses, transposable elements and conjugative plasmids). CRISPR clusters contain spacers, sequences complementary to antecedent mobile elements, and target invading nucleic acids. CRISPR clusters are transcribed and processed into CRISPR RNA (crRNA). A nuclease that degrades cyclic oligoadenylates (cOA), second messengers that induce an antiviral state important for defense against invading nucleic acids. Destruction of cOA deactivates the Csx1 ribonuclease, preventing uncontrolled degradation of cellular RNA. Slowly degrades cA4 (a tetraadenylate ring) into first a linear tetraadenylate product and secondly into a linear diadenylate product with 5'-OH and 2',3'-cyclic phosphate termini. Is 10-fold less active than SSO2081, suggesting it plays a minor role in cA4 degradation. There may be 2 active sites per homodimer. The protein is CRISPR system ring nuclease SSO1393 of Saccharolobus solfataricus (strain ATCC 35092 / DSM 1617 / JCM 11322 / P2) (Sulfolobus solfataricus).